The chain runs to 273 residues: Cytosolic sulfotransferase 4 (273 aa).

74-79 (KCGTTW) lines the 3'-phosphoadenylyl sulfate pocket. His121 acts as the Proton acceptor in catalysis. 3'-phosphoadenylyl sulfate is bound by residues Arg143 and 239–241 (RKG).

This sequence belongs to the sulfotransferase 1 family.

Its subcellular location is the cytoplasm. In terms of biological role, sulfotransferase that utilizes 3'-phospho-5'-adenylyl sulfate (PAPS) as sulfonate donor. In Arabidopsis thaliana (Mouse-ear cress), this protein is Cytosolic sulfotransferase 4 (SOT4).